The sequence spans 330 residues: Pantothenate kinase (330 aa).

An ATP-binding site is contributed by 108 to 115 (GSVAVGKS).

It belongs to the prokaryotic pantothenate kinase family.

It localises to the cytoplasm. The catalysed reaction is (R)-pantothenate + ATP = (R)-4'-phosphopantothenate + ADP + H(+). Its pathway is cofactor biosynthesis; coenzyme A biosynthesis; CoA from (R)-pantothenate: step 1/5. This Allorhizobium ampelinum (strain ATCC BAA-846 / DSM 112012 / S4) (Agrobacterium vitis (strain S4)) protein is Pantothenate kinase.